We begin with the raw amino-acid sequence, 356 residues long: Glycoprotein 42 (356 aa).

Positions 1–32 are cleaved as a signal peptide; that stretch reads MEGPAFSKPLKDKINPWGPLIVLGILIRAGVS. At 33 to 331 the chain is on the virion surface side; that stretch reads VQRDSPHQVF…VLGTNSNHTT (299 aa). Residues N43 and N58 are each glycosylated (N-linked (GlcNAc...) asparagine; by host). The interval 247–279 is disordered; sequence RPAQIMLPRPPQPPPPGTASIVPETAPPSQQPG. The segment covering 254–263 has biased composition (pro residues); the sequence is PRPPQPPPPG. N296 is a glycosylation site (N-linked (GlcNAc...) asparagine; by host). The CXXC signature appears at 306-309; the sequence is CWLC. N-linked (GlcNAc...) asparagine; by host glycosylation is present at N328. Residues 332-352 form a helical membrane-spanning segment; it reads LISTIMGLLIILLLLLILLLW. Residues 353–356 lie on the Intravirion side of the membrane; the sequence is TLHS.

In terms of assembly, homooligomer. Forms heterooligomers with mouse EPOR, probably via their respective transmembrane domains. BB6 deletion mutant does not interact with mouse MST1R isoform sf-Stk.

It localises to the host endoplasmic reticulum membrane. The protein localises to the host cell membrane. Its subcellular location is the virion membrane. Its function is as follows. This envelope-like membrane glycoprotein is responsible for ligand-independent activation of the erythropoietin receptor EPOR leading to the abnormally rapid proliferation of erythroid precursor cells. In the first stage of Friend disease, constitutive activation of the EPOR by gp42 causes uncontrolled, polyclonal proliferation of infected erythroblasts, leading to polycythemia (massive increase in the number of mature red cells). Host susceptibility to SSFV-induced erythroblastosis usually depends on the expression of the truncated isoform of MST1R receptor tyrosine kinase (MST1R isoform sf-Stk), but the deletion mutant BB6 apparently can overcome its absence. The chain is Glycoprotein 42 (env) from Mus musculus (Mouse).